Consider the following 364-residue polypeptide: Palmitoyltransferase ZDHHC9 (364 aa).

Residues 1–35 (MSVMVVRKKVTRKWEKLPGRNTFCCDGRVMMARQK) lie on the Cytoplasmic side of the membrane. A helical membrane pass occupies residues 36–56 (GIFYLTLFLILGTCTLFFAFE). Residues 57 to 63 (CRYLAVQ) are Lumenal-facing. The helical transmembrane segment at 64 to 84 (LSPAIPVFAAMLFLFSMATLL) threads the bilayer. The Cytoplasmic portion of the chain corresponds to 85-183 (RTSFSDPGVI…NCVGKRNYRY (99 aa)). The DHHC domain occupies 139–189 (KYCYTCKIFRPPRASHCSICDNCVERFDHHCPWVGNCVGKRNYRYFYLFIL). Cys169 (S-palmitoyl cysteine intermediate) is an active-site residue. Residues 184–204 (FYLFILSLSLLTIYVFAFNIV) traverse the membrane as a helical segment. Residues 205-228 (YVALKSLKIGFLETLKETPGTVLE) lie on the Lumenal side of the membrane. Residues 229–249 (VLICFFTLWSVVGLTGFHTFL) traverse the membrane as a helical segment. Over 250-364 (VALNQTTNED…PPQEASEAEK (115 aa)) the chain is Cytoplasmic. A disordered region spans residues 303-364 (PLEESGSRPP…PPQEASEAEK (62 aa)). Polar residues predominate over residues 310-336 (RPPSTQETSSSLLPQSPASTEHMNSNE). A compositionally biased stretch (pro residues) spans 346–356 (EMPPPEPPEPP).

The protein belongs to the DHHC palmitoyltransferase family. ERF2/ZDHHC9 subfamily. In terms of assembly, interacts with GOLGA7.

It localises to the endoplasmic reticulum membrane. The protein resides in the golgi apparatus membrane. It catalyses the reaction L-cysteinyl-[protein] + hexadecanoyl-CoA = S-hexadecanoyl-L-cysteinyl-[protein] + CoA. Functionally, palmitoyltransferase that catalyzes the addition of palmitate onto various protein substrates, such as ADRB2, GSDMD, HRAS, NRAS and CGAS. The ZDHHC9-GOLGA7 complex is a palmitoyltransferase specific for HRAS and NRAS. May have a palmitoyltransferase activity toward the beta-2 adrenergic receptor/ADRB2 and therefore regulate G protein-coupled receptor signaling. Acts as a regulator of innate immunity by catalyzing palmitoylation of CGAS, thereby promoting CGAS homodimerization and cyclic GMP-AMP synthase activity. Activates pyroptosis by catalyzing palmitoylation of gasdermin-D (GSDMD), thereby promoting membrane translocation and pore formation of GSDMD. This chain is Palmitoyltransferase ZDHHC9 (Zdhhc9), found in Mus musculus (Mouse).